The primary structure comprises 735 residues: Ethylene receptor 1 (735 aa).

3 consecutive transmembrane segments (helical) span residues 23–43 (ISDF…IYFV), 54–74 (VLVQ…INLW), and 92–112 (VLTA…IPDL). Residues Cys-65 and His-69 each coordinate Cu cation. A GAF domain is found at 158–307 (DRHTILKTTL…VVADQVAVAL (150 aa)). Residues 350-586 (VMNHEMRTPM…IFDVKLAISN (237 aa)) form the Histidine kinase domain. At His-353 the chain carries Phosphohistidine; by autocatalysis. Residues 609–726 (KVLVMDENGV…NMRNVLSDRL (118 aa)) form the Response regulatory domain. Asp-657 carries the post-translational modification 4-aspartylphosphate. Lys-711 participates in a covalent cross-link: Glycyl lysine isopeptide (Lys-Gly) (interchain with G-Cter in ubiquitin).

This sequence belongs to the ethylene receptor family. As to quaternary structure, homodimer; disulfide-linked. The cofactor is Cu cation. In terms of processing, activation probably requires a transfer of a phosphate group between a His in the transmitter domain and an Asp of the receiver domain.

It is found in the endoplasmic reticulum membrane. It catalyses the reaction ATP + protein L-histidine = ADP + protein N-phospho-L-histidine.. In terms of biological role, may act early in the ethylene signal transduction pathway, possibly as an ethylene receptor, or as a regulator of the pathway. This is Ethylene receptor 1 (ETR1) from Brassica oleracea (Wild cabbage).